The sequence spans 128 residues: Small ribosomal subunit protein uS11 (128 aa).

Belongs to the universal ribosomal protein uS11 family. Part of the 30S ribosomal subunit. Interacts with proteins S7 and S18. Binds to IF-3.

Located on the platform of the 30S subunit, it bridges several disparate RNA helices of the 16S rRNA. Forms part of the Shine-Dalgarno cleft in the 70S ribosome. The sequence is that of Small ribosomal subunit protein uS11 from Vesicomyosocius okutanii subsp. Calyptogena okutanii (strain HA).